The chain runs to 609 residues: Phosphomethylpyrimidine synthase (609 aa).

Residues Asn-219, Met-248, Tyr-277, His-313, 333–335 (SRG), 374–377 (DGLR), and Glu-413 each bind substrate. Position 417 (His-417) interacts with Zn(2+). Position 440 (Tyr-440) interacts with substrate. His-481 serves as a coordination point for Zn(2+). The [4Fe-4S] cluster site is built by Cys-561, Cys-564, and Cys-569.

This sequence belongs to the ThiC family. The cofactor is [4Fe-4S] cluster.

It catalyses the reaction 5-amino-1-(5-phospho-beta-D-ribosyl)imidazole + S-adenosyl-L-methionine = 4-amino-2-methyl-5-(phosphooxymethyl)pyrimidine + CO + 5'-deoxyadenosine + formate + L-methionine + 3 H(+). Its pathway is cofactor biosynthesis; thiamine diphosphate biosynthesis. In terms of biological role, catalyzes the synthesis of the hydroxymethylpyrimidine phosphate (HMP-P) moiety of thiamine from aminoimidazole ribotide (AIR) in a radical S-adenosyl-L-methionine (SAM)-dependent reaction. This is Phosphomethylpyrimidine synthase from Deinococcus geothermalis (strain DSM 11300 / CIP 105573 / AG-3a).